The chain runs to 342 residues: Isopentenyl-diphosphate delta-isomerase (342 aa).

A substrate-binding site is contributed by 6 to 7 (RK). Residues S63, 64 to 66 (SMT), S94, and N122 contribute to the FMN site. 94-96 (SMR) serves as a coordination point for substrate. Q157 serves as a coordination point for substrate. E158 is a binding site for Mg(2+). Residues K189, T219, 269–271 (GLK), and 290–291 (AG) contribute to the FMN site.

The protein belongs to the IPP isomerase type 2 family. As to quaternary structure, homooctamer. Dimer of tetramers. FMN serves as cofactor. NADPH is required as a cofactor. It depends on Mg(2+) as a cofactor.

The protein localises to the cytoplasm. The enzyme catalyses isopentenyl diphosphate = dimethylallyl diphosphate. In terms of biological role, involved in the biosynthesis of isoprenoids. Catalyzes the 1,3-allylic rearrangement of the homoallylic substrate isopentenyl (IPP) to its allylic isomer, dimethylallyl diphosphate (DMAPP). The chain is Isopentenyl-diphosphate delta-isomerase from Rickettsia bellii (strain RML369-C).